The primary structure comprises 223 residues: Ribosome assembly factor mrt4 (223 aa).

This sequence belongs to the universal ribosomal protein uL10 family. In terms of assembly, associates with the pre-60S ribosomal particle.

The protein localises to the nucleus. It localises to the nucleolus. Its subcellular location is the cytoplasm. In terms of biological role, component of the ribosome assembly machinery. Nuclear paralog of the ribosomal protein P0, it binds pre-60S subunits at an early stage of assembly in the nucleolus, and is replaced by P0 in cytoplasmic pre-60S subunits and mature 80S ribosomes. The protein is Ribosome assembly factor mrt4 of Dictyostelium discoideum (Social amoeba).